The primary structure comprises 400 residues: Centrosomal protein CEP57L1 (400 aa).

Serine 45 bears the Phosphoserine mark. Coiled coils occupy residues 47-111 and 138-213; these read NNQA…KKDI and NVER…QDRA. Disordered stretches follow at residues 222–261 and 314–400; these read REPP…EPVS and MESK…KWEQ. Residues 244 to 258 show a composition bias toward polar residues; sequence RTTSQARANPQSSGE. Positions 261 to 345 form a coiled coil; sequence SICDSLSELL…EKIENSRINE (85 aa). 2 stretches are compositionally biased toward basic and acidic residues: residues 314-342 and 391-400; these read MESK…ENSR and LRRDDIKWEQ.

Belongs to the translokin family.

The protein localises to the cytoplasm. It is found in the cytoskeleton. It localises to the microtubule organizing center. Its subcellular location is the centrosome. Its function is as follows. Centrosomal protein which may be required for microtubule attachment to centrosomes. The sequence is that of Centrosomal protein CEP57L1 (Cep57l1) from Mus musculus (Mouse).